A 201-amino-acid chain; its full sequence is Small ribosomal subunit protein uS4c (201 aa).

An S4 RNA-binding domain is found at 90–153; it reads MRLDNVIFRL…SSQNLVKRYL (64 aa).

This sequence belongs to the universal ribosomal protein uS4 family. In terms of assembly, part of the 30S ribosomal subunit. Contacts protein S5. The interaction surface between S4 and S5 is involved in control of translational fidelity.

It is found in the plastid. The protein localises to the chloroplast. Its function is as follows. One of the primary rRNA binding proteins, it binds directly to 16S rRNA where it nucleates assembly of the body of the 30S subunit. Functionally, with S5 and S12 plays an important role in translational accuracy. This Gracilaria tenuistipitata var. liui (Red alga) protein is Small ribosomal subunit protein uS4c (rps4).